The following is an 82-amino-acid chain: Small ribosomal subunit protein eS27A (82 aa).

The C4-type zinc-finger motif lies at 37–59 (CPGCLNITTVFSHAQTAVTCESC). Residue Cys-40 is modified to S-methylcysteine.

It belongs to the eukaryotic ribosomal protein eS27 family. In terms of assembly, component of the small ribosomal subunit (SSU). Mature yeast ribosomes consist of a small (40S) and a large (60S) subunit. The 40S small subunit contains 1 molecule of ribosomal RNA (18S rRNA) and 33 different proteins (encoded by 57 genes). The large 60S subunit contains 3 rRNA molecules (25S, 5.8S and 5S rRNA) and 46 different proteins (encoded by 81 genes). Zn(2+) is required as a cofactor. In terms of processing, the N-terminus is not modified.

It is found in the cytoplasm. Functionally, component of the ribosome, a large ribonucleoprotein complex responsible for the synthesis of proteins in the cell. The small ribosomal subunit (SSU) binds messenger RNAs (mRNAs) and translates the encoded message by selecting cognate aminoacyl-transfer RNA (tRNA) molecules. The large subunit (LSU) contains the ribosomal catalytic site termed the peptidyl transferase center (PTC), which catalyzes the formation of peptide bonds, thereby polymerizing the amino acids delivered by tRNAs into a polypeptide chain. The nascent polypeptides leave the ribosome through a tunnel in the LSU and interact with protein factors that function in enzymatic processing, targeting, and the membrane insertion of nascent chains at the exit of the ribosomal tunnel. The polypeptide is Small ribosomal subunit protein eS27A (Saccharomyces cerevisiae (strain ATCC 204508 / S288c) (Baker's yeast)).